Here is a 129-residue protein sequence, read N- to C-terminus: Ribosome-binding factor A (129 aa).

This sequence belongs to the RbfA family. As to quaternary structure, monomer. Binds 30S ribosomal subunits, but not 50S ribosomal subunits or 70S ribosomes.

Its subcellular location is the cytoplasm. Functionally, one of several proteins that assist in the late maturation steps of the functional core of the 30S ribosomal subunit. Associates with free 30S ribosomal subunits (but not with 30S subunits that are part of 70S ribosomes or polysomes). Required for efficient processing of 16S rRNA. May interact with the 5'-terminal helix region of 16S rRNA. The polypeptide is Ribosome-binding factor A (Pseudomonas aeruginosa (strain UCBPP-PA14)).